Reading from the N-terminus, the 772-residue chain is PDZ domain-containing protein 4 (772 aa).

A PDZ domain is found at 136 to 221; that stretch reads EVELCKNSHQ…NISLLVARPE (86 aa). The segment at 239 to 320 is disordered; it reads DFGSENEGDL…TNTPGSLRKF (82 aa). Serine 242 carries the post-translational modification Phosphoserine. The segment covering 287–303 has biased composition (basic and acidic residues); that stretch reads RTDESTRNEESSEHDLL. A coiled-coil region spans residues 394–424; the sequence is VNRNESLGHEMAMLEEELRHLEFKCRNILRA. The interval 450–573 is disordered; the sequence is ASEPKKHELS…VGPEGSPYLS (124 aa). Residues 452–472 show a composition bias toward basic and acidic residues; that stretch reads EPKKHELSDISELPEKSDKDS. Serine 459 is modified (phosphoserine). Composition is skewed to polar residues over residues 473–484 and 502–511; these read TSAYNTGESCRS and AGNSNLNRTP. The span at 535–552 shows a compositional bias: basic and acidic residues; sequence LSRDPEVGRRQHTEERVR.

It localises to the cytoplasm. It is found in the cell cortex. This is PDZ domain-containing protein 4 (Pdzd4) from Mus musculus (Mouse).